We begin with the raw amino-acid sequence, 171 residues long: Small ribosomal subunit protein uS5 (171 aa).

An S5 DRBM domain is found at 15–78 (LEEKVVKINR…EKAKKQLVRI (64 aa)).

Belongs to the universal ribosomal protein uS5 family. Part of the 30S ribosomal subunit. Contacts proteins S4 and S8.

Its function is as follows. With S4 and S12 plays an important role in translational accuracy. In terms of biological role, located at the back of the 30S subunit body where it stabilizes the conformation of the head with respect to the body. The protein is Small ribosomal subunit protein uS5 of Onion yellows phytoplasma (strain OY-M).